A 149-amino-acid polypeptide reads, in one-letter code: UPF0208 membrane protein VSAL_I2111 (149 aa).

The next 2 membrane-spanning stretches (helical) occupy residues 41-61 (FAVK…MVFN) and 69-89 (SIII…WLGN).

The protein belongs to the UPF0208 family.

The protein localises to the cell inner membrane. The chain is UPF0208 membrane protein VSAL_I2111 from Aliivibrio salmonicida (strain LFI1238) (Vibrio salmonicida (strain LFI1238)).